Reading from the N-terminus, the 151-residue chain is Superoxide dismutase [Cu-Zn] 2 (151 aa).

Residues H44, H46, and H61 each contribute to the Cu cation site. A disulfide bond links C55 and C144. Positions 61, 69, 78, and 81 each coordinate Zn(2+). H118 contacts Cu cation.

The protein belongs to the Cu-Zn superoxide dismutase family. In terms of assembly, homodimer. Cu cation serves as cofactor. The cofactor is Zn(2+).

It is found in the cytoplasm. It catalyses the reaction 2 superoxide + 2 H(+) = H2O2 + O2. In terms of biological role, destroys radicals which are normally produced within the cells and which are toxic to biological systems. This is Superoxide dismutase [Cu-Zn] 2 (SODCC.1) from Zea mays (Maize).